The chain runs to 214 residues: Outer-membrane lipoprotein LolB (214 aa).

A signal peptide spans 1 to 25; the sequence is MNNLKRLTKTIFSCFTLSALLLLAG. Residue cysteine 26 is the site of N-palmitoyl cysteine attachment. Cysteine 26 carries S-diacylglycerol cysteine lipidation. Residues 143–160 are compositionally biased toward polar residues; it reads QVIESDSQGKPKQLTNTQ. The segment at 143–163 is disordered; sequence QVIESDSQGKPKQLTNTQTPP.

It belongs to the LolB family. As to quaternary structure, monomer.

The protein resides in the cell outer membrane. In terms of biological role, plays a critical role in the incorporation of lipoproteins in the outer membrane after they are released by the LolA protein. This is Outer-membrane lipoprotein LolB from Shewanella baltica (strain OS223).